A 133-amino-acid chain; its full sequence is Ribosome-binding factor A (133 aa).

Belongs to the RbfA family. Monomer. Binds 30S ribosomal subunits, but not 50S ribosomal subunits or 70S ribosomes.

It is found in the cytoplasm. One of several proteins that assist in the late maturation steps of the functional core of the 30S ribosomal subunit. Associates with free 30S ribosomal subunits (but not with 30S subunits that are part of 70S ribosomes or polysomes). Required for efficient processing of 16S rRNA. May interact with the 5'-terminal helix region of 16S rRNA. This is Ribosome-binding factor A from Escherichia coli O127:H6 (strain E2348/69 / EPEC).